The sequence spans 252 residues: D-aminoacyl-tRNA deacylase (252 aa).

It belongs to the DtdA deacylase family. As to quaternary structure, monomer. It depends on Zn(2+) as a cofactor.

It catalyses the reaction a D-aminoacyl-tRNA + H2O = a tRNA + a D-alpha-amino acid + H(+). The catalysed reaction is glycyl-tRNA(Ala) + H2O = tRNA(Ala) + glycine + H(+). Its function is as follows. D-aminoacyl-tRNA deacylase with broad substrate specificity. By recycling D-aminoacyl-tRNA to D-amino acids and free tRNA molecules, this enzyme counteracts the toxicity associated with the formation of D-aminoacyl-tRNA entities in vivo. The sequence is that of D-aminoacyl-tRNA deacylase from Pyrobaculum arsenaticum (strain DSM 13514 / JCM 11321 / PZ6).